A 218-amino-acid polypeptide reads, in one-letter code: Albicidin resistance protein (218 aa).

It localises to the periplasm. In terms of biological role, albicidin resistance protein binds to form a complex without antibiotic activity but without catalyzing any further chemical modifications to albicidin. This Klebsiella oxytoca protein is Albicidin resistance protein.